An 86-amino-acid polypeptide reads, in one-letter code: ATP synthase subunit c (86 aa).

2 helical membrane-spanning segments follow: residues 13–33 and 63–83; these read FFATGLAYLGAGISILAAGLA and ILGQAMVETSGIYALIIAFIL.

This sequence belongs to the ATPase C chain family. F-type ATPases have 2 components, F(1) - the catalytic core - and F(0) - the membrane proton channel. F(1) has five subunits: alpha(3), beta(3), gamma(1), delta(1), epsilon(1). F(0) has three main subunits: a(1), b(2) and c(10-14). The alpha and beta chains form an alternating ring which encloses part of the gamma chain. F(1) is attached to F(0) by a central stalk formed by the gamma and epsilon chains, while a peripheral stalk is formed by the delta and b chains.

It localises to the cell membrane. Its function is as follows. F(1)F(0) ATP synthase produces ATP from ADP in the presence of a proton or sodium gradient. F-type ATPases consist of two structural domains, F(1) containing the extramembraneous catalytic core and F(0) containing the membrane proton channel, linked together by a central stalk and a peripheral stalk. During catalysis, ATP synthesis in the catalytic domain of F(1) is coupled via a rotary mechanism of the central stalk subunits to proton translocation. Functionally, key component of the F(0) channel; it plays a direct role in translocation across the membrane. A homomeric c-ring of between 10-14 subunits forms the central stalk rotor element with the F(1) delta and epsilon subunits. The sequence is that of ATP synthase subunit c from Acholeplasma laidlawii (strain PG-8A).